Consider the following 244-residue polypeptide: rRNA adenine N-6-methyltransferase (244 aa).

6 residues coordinate S-adenosyl-L-methionine: Asn11, Ile13, Gly38, Glu59, Asp84, and Asn101.

The protein belongs to the class I-like SAM-binding methyltransferase superfamily. rRNA adenine N(6)-methyltransferase family.

It carries out the reaction adenosine(2085) in 23S rRNA + 2 S-adenosyl-L-methionine = N(6)-dimethyladenosine(2085) in 23S rRNA + 2 S-adenosyl-L-homocysteine + 2 H(+). This protein produces a dimethylation of the adenine residue at position 2085 in 23S rRNA, resulting in reduced affinity between ribosomes and macrolide-lincosamide-streptogramin B antibiotics. This is rRNA adenine N-6-methyltransferase (ermC) from Staphylococcus aureus.